The chain runs to 644 residues: Sodium/hydrogen exchanger 9 (644 aa).

Topologically, residues Met1–Gly20 are lumenal. A helical transmembrane segment spans residues Ala21–Phe41. Residues Lys42–Arg45 lie on the Cytoplasmic side of the membrane. The helical transmembrane segment at Phe46–Leu66 threads the bilayer. The Lumenal portion of the chain corresponds to Arg67 to Lys126. The helical transmembrane segment at Met127 to Gly147 threads the bilayer. The Cytoplasmic portion of the chain corresponds to Tyr148 to Thr164. Residues Tyr165–Val185 form a helical membrane-spanning segment. Residues Lys186–Asp203 are Lumenal-facing. The helical transmembrane segment at Cys204–His224 threads the bilayer. Residues Glu225–Leu235 are Cytoplasmic-facing. A helical membrane pass occupies residues Leu236 to Ile256. Residues Tyr257 to Asn277 are Lumenal-facing. A helical transmembrane segment spans residues Phe278–Leu298. Over Leu299–Pro309 the chain is Cytoplasmic. A helical membrane pass occupies residues Met310–Ala327. Residues Glu328–Thr333 lie on the Lumenal side of the membrane. A helical membrane pass occupies residues Gly334–Tyr350. Residues Asn351–Leu364 lie on the Cytoplasmic side of the membrane. Residues Phe365 to Phe385 form a helical membrane-spanning segment. Residue Thr386 is a topological domain, lumenal. Residues Phe387–Ala407 traverse the membrane as a helical segment. Residues Arg408–Trp429 lie on the Cytoplasmic side of the membrane. A helical transmembrane segment spans residues Asn430–Ile450. Residues Arg451 to Thr465 lie on the Lumenal side of the membrane. The chain crosses the membrane as a helical span at residues Leu466 to Trp486. Over Leu487–Asp644 the chain is Cytoplasmic.

Belongs to the monovalent cation:proton antiporter 1 (CPA1) transporter (TC 2.A.36) family. As to quaternary structure, homodimer; phosphatidylinositol-4,5-bisphosphate (PIP2) and phosphatidylinositol 3,4,5-trisphosphate (PIP3) could be involved in the dimer stabilization. Interacts (via the C-terminus) with RACK1. Interacts with CHP1. In terms of tissue distribution, expressed in hair bundles and in vestibular hair bundles. Expressed in brain.

It is found in the late endosome membrane. Its subcellular location is the early endosome membrane. It localises to the recycling endosome membrane. The protein localises to the cell membrane. The protein resides in the cytoplasmic vesicle. It is found in the phagosome membrane. The catalysed reaction is Na(+)(in) + H(+)(out) = Na(+)(out) + H(+)(in). It carries out the reaction K(+)(in) + H(+)(out) = K(+)(out) + H(+)(in). Endosomal Na(+), K(+)/H(+) antiporter. Mediates the electroneutral exchange of endosomal luminal H(+) for a cytosolic Na(+) or K(+). By facilitating proton efflux, SLC9A9 counteracts the acidity generated by vacuolar (V)-ATPase, thereby limiting luminal acidification. Regulates organellar pH and consequently, endosome maturation and endocytic trafficking of plasma membrane receptors and neurotransporters. Promotes the recycling of transferrin receptors back to the cell surface to facilitate additional iron uptake in the brain. Regulates synaptic transmission by regulating the luminal pH of axonal endosomes. Regulates phagosome lumenal pH, thus affecting phagosome maturation, and consequently, microbicidal activity in macrophages. Can also be active at the cell surface of specialized cells, e.g., in the inner ear hair bundles uses the high K(+) of the endolymph to regulate intracelular pH. This chain is Sodium/hydrogen exchanger 9 (Slc9a9), found in Rattus norvegicus (Rat).